The chain runs to 193 residues: Achaete-scute homolog 2 (193 aa).

3 disordered regions span residues 1 to 27, 37 to 56, and 118 to 177; these read MDGGTLPRSAPPAPPVPVGCAARRRPA, RRRPATAETGGGAAAVARRN, and GGLR…GALS. In terms of domain architecture, bHLH spans 50–102; that stretch reads AAVARRNERERNRVKLVNLGFQALRQHVPHGGASKKLSKVETLRSAVEYIRAL. A compositionally biased stretch (low complexity) spans 140–150; sequence AASPSRASSSP.

Efficient DNA binding requires dimerization with another basic helix-loop-helix (bHLH) protein. Forms heterodimers with bHLH transcription factor TCF3. May not heterodimerise with bHLH protein HAND1. Expressed in the placenta at a stage between the first and second trimesters and when it matures, at about 32-36 weeks. Expressed in the extravillous trophoblasts, the intermediate trophoblasts, and at lower levels in the cytotrophoblasts and stroma of chorionic villi of the developing placenta. Expressed in follicular T-helper (Tfh) cells.

The protein resides in the nucleus. In terms of biological role, transcription factor. Binds to E-box motifs 5'-CANNTG-3' in the regulatory elements of target genes, probably as a heterodimer with another basic helix-loop-helix (bHLH) protein such as the transcription factor TCF3. May bind both open and closed chromatin, acting as a pioneer transcription factor to allow other factors to bind and activate lineage-specific genes. Required during post-implantation development for the generation of some differentiated trophoblast cell types. Transcriptional activity of ASCL2 may be antagonised in a subset of trophoblast cells by bHLH transcription factor HAND1, perhaps by competing for dimerization with other bHLH proteins. Involved in differentiation and function of follicular T-helper (Tfh) cells, thereby playing a role in germinal center responses; probably modulates expression of genes involved in Tfh cell function, such as BCL6. May also act as a suppressor of Th1-, Th2- and Th17-cell differentiation. Induces the formation of stem cells in intestinal crypts in vitro, synergistically activating transcription of target genes, such as SOX9, together with TCF4/beta-catenin. May form a bistable transcriptional switch, controlling expression of its own gene together with Wnt/R-spondin signaling, and thereby maintaining stem cell characteristics. Modulates expression of target genes, including perhaps down-regulating EGR1/Krox24 and chemokine CXCL10/Mob-1 and up-regulating CXCR4 and CDKN1C/p57kip2, in Schwann cells. May play a role in reducing proliferation of Schwann cells, perhaps acting via modulation of expression of CDKN1C. May be dispensable for blastocyst formation and later embryonic function. May be involved in the determination of neuronal precursors. In Homo sapiens (Human), this protein is Achaete-scute homolog 2 (ASCL2).